The following is a 104-amino-acid chain: Ycf49-like protein (104 aa).

Transmembrane regions (helical) follow at residues 6-26 (IPTW…IALV), 41-61 (LAWG…WHFF), and 73-93 (LQAL…WWIY).

The protein belongs to the ycf49 family.

The protein resides in the cell membrane. This chain is Ycf49-like protein, found in Synechocystis sp. (strain ATCC 27184 / PCC 6803 / Kazusa).